The following is a 353-amino-acid chain: Uroporphyrinogen decarboxylase (353 aa).

Residues 28–32, aspartate 78, tyrosine 155, serine 210, and histidine 325 contribute to the substrate site; that span reads RQAGR.

This sequence belongs to the uroporphyrinogen decarboxylase family. In terms of assembly, homodimer.

It localises to the cytoplasm. The catalysed reaction is uroporphyrinogen III + 4 H(+) = coproporphyrinogen III + 4 CO2. It functions in the pathway porphyrin-containing compound metabolism; protoporphyrin-IX biosynthesis; coproporphyrinogen-III from 5-aminolevulinate: step 4/4. Its function is as follows. Catalyzes the decarboxylation of four acetate groups of uroporphyrinogen-III to yield coproporphyrinogen-III. The protein is Uroporphyrinogen decarboxylase of Nostoc punctiforme (strain ATCC 29133 / PCC 73102).